The primary structure comprises 461 residues: MVHQSNGHGEAAAAAANGKSNGHAAAANGKSNGHAAAAAVEWNFARGKDGILATTGAKNSIRAIRYKISASVEESGPRPVLPLAHGDPSVFPAFRTAVEAEDAVAAALRTGQFNCYAAGVGLPAARSAVAEHLSQGVPYKLSADDVFLTAGGTQAIEVIIPVLAQTAGANILLPRPGYPNYEARAAFNKLEVRHFDLIPDKGWEIDIDSLESIADKNTTAMVIINPNNPCGSVYSYDHLAKVAEVARKLGILVIADEVYGKLVLGSAPFIPMGVFGHIAPVLSIGSLSKSWIVPGWRLGWVAVYDPTKILEKTKISTSITNYLNVSTDPATFVQEALPKILENTKADFFKRIIGLLKESSEICYREIKENKYITCPHKPEGSMFVMVKLNLHLLEEIHDDIDFCCKLAKEESVILCPGSVLGMENWVRITFACVPSSLQDGLERVKSFCQRNKKKNSINGC.

Positions 1-29 (MVHQSNGHGEAAAAAANGKSNGHAAAANG) are disordered. Positions 11–29 (AAAAAANGKSNGHAAAANG) are enriched in low complexity. Lysine 289 is modified (N6-(pyridoxal phosphate)lysine).

The protein belongs to the class-I pyridoxal-phosphate-dependent aminotransferase family. Pyridoxal 5'-phosphate is required as a cofactor. In terms of tissue distribution, expressed in roots, but not in leaves.

It catalyses the reaction nicotianamine + 2-oxoglutarate = 3''-deamino-3''-oxonicotianamine + L-glutamate. Involved in biosynthesis of mugineic acid family phytosiderophores. The chain is Nicotianamine aminotransferase A from Hordeum vulgare (Barley).